Reading from the N-terminus, the 132-residue chain is Arginine decarboxylase proenzyme (132 aa).

Serine 70 acts as the Schiff-base intermediate with substrate; via pyruvic acid in catalysis. Serine 70 carries the pyruvic acid (Ser); by autocatalysis modification. Histidine 75 (proton acceptor; for processing activity) is an active-site residue. The active-site Proton donor; for catalytic activity is cysteine 90.

The protein belongs to the prokaryotic AdoMetDC family. Type 1 subfamily. As to quaternary structure, heterooctamer of four alpha and four beta chains arranged as a tetramer of alpha/beta heterodimers. Pyruvate is required as a cofactor. In terms of processing, is synthesized initially as an inactive proenzyme. Formation of the active enzyme involves a self-maturation process in which the active site pyruvoyl group is generated from an internal serine residue via an autocatalytic post-translational modification. Two non-identical subunits are generated from the proenzyme in this reaction, and the pyruvate is formed at the N-terminus of the alpha chain, which is derived from the carboxyl end of the proenzyme. The post-translation cleavage follows an unusual pathway, termed non-hydrolytic serinolysis, in which the side chain hydroxyl group of the serine supplies its oxygen atom to form the C-terminus of the beta chain, while the remainder of the serine residue undergoes an oxidative deamination to produce ammonia and the pyruvoyl group blocking the N-terminus of the alpha chain.

It catalyses the reaction L-arginine + H(+) = agmatine + CO2. It functions in the pathway amine and polyamine biosynthesis; agmatine biosynthesis; agmatine from L-arginine: step 1/1. Specifically catalyzes the decarboxylation of L-arginine to agmatine. Has no S-adenosylmethionine decarboxylase (AdoMetDC) activity. The sequence is that of Arginine decarboxylase proenzyme from Aeropyrum pernix (strain ATCC 700893 / DSM 11879 / JCM 9820 / NBRC 100138 / K1).